Consider the following 245-residue polypeptide: Putative MSV199 domain-containing protein 146R (245 aa).

One can recognise a GIY-YIG domain in the interval 2 to 97 (RKGYIYVIEN…NTLHGKLKNL (96 aa)).

This is Putative MSV199 domain-containing protein 146R from Acheta domesticus (House cricket).